A 163-amino-acid chain; its full sequence is Neurotrophin-3 (163 aa).

The first 3 residues, 1 to 3 (IQS), serve as a signal peptide directing secretion. The propeptide occupies 4 to 119 (TSMDQGILTE…VLNRTSRRKR (116 aa)). Asn-112 carries an N-linked (GlcNAc...) asparagine glycan.

It belongs to the NGF-beta family.

It localises to the secreted. In terms of biological role, seems to promote the survival of visceral and proprioceptive sensory neurons. The polypeptide is Neurotrophin-3 (NTF3) (Chilabothrus striatus (Haitian boa constrictor)).